The chain runs to 54 residues: Large ribosomal subunit protein bL33 (54 aa).

Belongs to the bacterial ribosomal protein bL33 family.

The sequence is that of Large ribosomal subunit protein bL33 from Opitutus terrae (strain DSM 11246 / JCM 15787 / PB90-1).